The sequence spans 285 residues: Extracellular metalloprotease SMAC_06893 (285 aa).

Positions Met1–Gly18 are cleaved as a signal peptide. His197 is a binding site for Zn(2+). Glu198 is a catalytic residue. Zn(2+) is bound at residue His201. Cysteines 233 and 260 form a disulfide. Asn282 carries an N-linked (GlcNAc...) asparagine glycan.

This sequence belongs to the peptidase M43B family.

The protein resides in the secreted. In terms of biological role, secreted metalloproteinase that allows assimilation of proteinaceous substrates. In Sordaria macrospora (strain ATCC MYA-333 / DSM 997 / K(L3346) / K-hell), this protein is Extracellular metalloprotease SMAC_06893.